A 423-amino-acid polypeptide reads, in one-letter code: D-tagatose-1,6-bisphosphate aldolase subunit GatZ (423 aa).

Belongs to the GatZ/KbaZ family. GatZ subfamily. Forms a complex with GatY.

It participates in carbohydrate metabolism; D-tagatose 6-phosphate degradation; D-glyceraldehyde 3-phosphate and glycerone phosphate from D-tagatose 6-phosphate: step 2/2. In terms of biological role, component of the tagatose-1,6-bisphosphate aldolase GatYZ that is required for full activity and stability of the Y subunit. Could have a chaperone-like function for the proper and stable folding of GatY. When expressed alone, GatZ does not show any aldolase activity. Is involved in the catabolism of galactitol. This Salmonella enteritidis PT4 (strain P125109) protein is D-tagatose-1,6-bisphosphate aldolase subunit GatZ.